The following is a 362-amino-acid chain: NAD(P)H-quinone oxidoreductase subunit 1, chloroplastic (362 aa).

8 consecutive transmembrane segments (helical) span residues 27–47 (IWIL…LVIV), 94–114 (IPLF…SFLV), 128–148 (IGVF…LMAG), 164–184 (AAQS…ISLL), 202–222 (FFGW…ISSL), 247–267 (YSGI…LVSS), 303–323 (TMSI…SITI), and 335–355 (LLNL…LLTT).

It belongs to the complex I subunit 1 family. In terms of assembly, NDH is composed of at least 16 different subunits, 5 of which are encoded in the nucleus.

The protein localises to the plastid. It localises to the chloroplast thylakoid membrane. The enzyme catalyses a plastoquinone + NADH + (n+1) H(+)(in) = a plastoquinol + NAD(+) + n H(+)(out). It catalyses the reaction a plastoquinone + NADPH + (n+1) H(+)(in) = a plastoquinol + NADP(+) + n H(+)(out). Functionally, NDH shuttles electrons from NAD(P)H:plastoquinone, via FMN and iron-sulfur (Fe-S) centers, to quinones in the photosynthetic chain and possibly in a chloroplast respiratory chain. The immediate electron acceptor for the enzyme in this species is believed to be plastoquinone. Couples the redox reaction to proton translocation, and thus conserves the redox energy in a proton gradient. In Oryza sativa (Rice), this protein is NAD(P)H-quinone oxidoreductase subunit 1, chloroplastic (ndhA).